A 366-amino-acid chain; its full sequence is Zinc finger CCCH domain-containing protein 11 (366 aa).

Positions Leu43–Lys66 are disordered. A coiled-coil region spans residues Thr54 to Ala79. 2 C3H1-type zinc fingers span residues Asp90 to Asn117 and Lys160 to Pro198. Positions Lys208–Thr234 form a coiled coil. Residues Tyr293 to Leu338 are disordered. A compositionally biased stretch (polar residues) spans Glu312 to Gly321. The span at Glu325–Leu338 shows a compositional bias: acidic residues.

The polypeptide is Zinc finger CCCH domain-containing protein 11 (Oryza sativa subsp. japonica (Rice)).